Here is a 535-residue protein sequence, read N- to C-terminus: GMP synthase [glutamine-hydrolyzing] (535 aa).

Residues 24–217 (KILIVDFGSQ…VRNISGLGGD (194 aa)) enclose the Glutamine amidotransferase type-1 domain. The Nucleophile role is filled by cysteine 101. Active-site residues include histidine 191 and glutamate 193. The GMPS ATP-PPase domain occupies 218 to 410 (WTMHAFREEE…LGLPDVFVGR (193 aa)). 245–251 (SGGVDSA) contacts ATP.

In terms of assembly, homodimer.

It carries out the reaction XMP + L-glutamine + ATP + H2O = GMP + L-glutamate + AMP + diphosphate + 2 H(+). The protein operates within purine metabolism; GMP biosynthesis; GMP from XMP (L-Gln route): step 1/1. In terms of biological role, catalyzes the synthesis of GMP from XMP. The sequence is that of GMP synthase [glutamine-hydrolyzing] from Bradyrhizobium sp. (strain ORS 278).